Consider the following 355-residue polypeptide: Methyltransferase FUS9 (355 aa).

Residues Y18, N63, D86, S123, and F124 each coordinate S-adenosyl-L-homocysteine. A Mg(2+)-binding site is contributed by F231.

The protein belongs to the methyltransferase superfamily. Type-7 methyltransferase family. Mg(2+) serves as cofactor.

Its pathway is mycotoxin biosynthesis. Functionally, methyltransferase; part of the gene cluster that mediates the biosynthesis of the mycotoxin fusarin C. Within the cluster, FUS1, FUS2, FUS8 and FUS9 are sufficient for fusarin production. The roles of the other FUS members are yet undetermined. The fusarin C synthetase FUS1 is responsible for the condensation of one acetyl-coenzyme A (CoA) unit with six malonyl-CoA units and the amide linkage of the arising heptaketide and homoserine, subsequently releasing the first intermediate, prefusarin, as an alcohol with an open ring structure. The cytochrome P450 monooxygenase FUS8 participates in multiple oxidation processes at carbon C-20 and is able to use the FUS1 product as substrate, resulting in formation of 20-hydroxy-prefusarin. This reaction seems to be essential before the 2-pyrrolidone ring closure can be catalyzed by FUS2, generating 20-hydroxy-fusarin. FUS8 is able to further oxidizes carbon C-20 after ring closure, resulting in the formation of carboxy-fusarin C. As the last step, FUS9 methylates the hydroxyl group at C-21 to generate fusarin C. Fusarin C can then rearrange to epi-fusarin C, the (z)-isomers, and fusarin A and fusarin D. This is Methyltransferase FUS9 from Gibberella fujikuroi (strain CBS 195.34 / IMI 58289 / NRRL A-6831) (Bakanae and foot rot disease fungus).